Reading from the N-terminus, the 134-residue chain is Probable glycine cleavage system H protein (134 aa).

In terms of domain architecture, Lipoyl-binding spans 29–110 (TVLVGISDYA…PYENWIAKLK (82 aa)). N6-lipoyllysine is present on Lys70.

This sequence belongs to the GcvH family. In terms of assembly, the glycine cleavage system is composed of four proteins: P, T, L and H. (R)-lipoate is required as a cofactor.

Functionally, the glycine cleavage system catalyzes the degradation of glycine. The H protein shuttles the methylamine group of glycine from the P protein to the T protein. This chain is Probable glycine cleavage system H protein, found in Thermococcus kodakarensis (strain ATCC BAA-918 / JCM 12380 / KOD1) (Pyrococcus kodakaraensis (strain KOD1)).